The following is a 1265-amino-acid chain: Dynactin subunit 1 (1265 aa).

One can recognise a CAP-Gly domain in the interval 27–69; the sequence is GMTSFAVGKWVGVVLDEPKGKNSGSIKGQQYFQCDENCGMFVR. The tract at residues 81–179 is disordered; it reads GSRRSIEDVS…GNGAASHASS (99 aa). Serine 85, serine 110, serine 114, serine 117, and serine 121 each carry phosphoserine. 2 stretches are compositionally biased toward low complexity: residues 103-138 and 161-177; these read RLSSSRTSLSSSRQSLLGSRTQLTTSLSERTASSSS and AEGAPAASGGNGAASHA. Serine 183 is subject to Phosphoserine. Coiled coils occupy residues 213–570, 812–836, and 967–1084; these read NSGA…ESLQ, LIQFLNENMESVRQQVKLIKRRLPS, and QRAQ…NSTT. The segment at 1082–1106 is disordered; it reads STTGKVQPGSESHSPHNISLSGNTS. Position 1117 is a phosphoserine (serine 1117). Residues 1128–1160 adopt a coiled-coil conformation; the sequence is EEVELLKNAFNQERNQRLRLQAQDMRAKLSQFE.

Belongs to the dynactin 150 kDa subunit family. Monomer and homodimer. Subunit of dynactin, a multiprotein complex part of a tripartite complex with dynein and a adapter, such as BICDL1, BICD2 or HOOK3. The dynactin complex is built around ACTR1A/ACTB filament and consists of an actin-related filament composed of a shoulder domain, a pointed end and a barbed end. Its length is defined by its flexible shoulder domain. The soulder is composed of 2 DCTN1 subunits, 4 DCTN2 and 2 DCTN3. DCTN1/p150(glued) binds directly to microtubules and to cytoplasmic dynein.

The protein resides in the cytoplasm. The protein localises to the cytoskeleton. Functionally, part of the dynactin complex that activates the molecular motor dynein for ultra-processive transport along microtubules. Plays a key role in dynein-mediated retrograde transport of vesicles and organelles along microtubules by recruiting and tethering dynein to microtubules. Binds to both dynein and microtubules providing a link between specific cargos, microtubules and dynein. Essential for targeting dynein to microtubule plus ends, recruiting dynein to membranous cargos and enhancing dynein processivity (the ability to move along a microtubule for a long distance without falling off the track). Can also act as a brake to slow the dynein motor during motility along the microtubule. Can regulate microtubule stability by promoting microtubule formation, nucleation and polymerization and by inhibiting microtubule catastrophe in neurons. Inhibits microtubule catastrophe by binding both to microtubules and to tubulin, leading to enhanced microtubule stability along the axon. Plays a role in metaphase spindle orientation. Plays a role in centriole cohesion and subdistal appendage organization and function. Its recruitment to the centriole in a KIF3A-dependent manner is essential for the maintenance of centriole cohesion and the formation of subdistal appendage. Also required for microtubule anchoring at the mother centriole. Plays a role in primary cilia formation. This Drosophila melanogaster (Fruit fly) protein is Dynactin subunit 1.